The chain runs to 184 residues: MTKQYMTHRCLIAPPEMADDFFANTVIYLARHDEEGAQGIIINRPAGIQIKELLNDLDIDADNVNPHEVLQGGPLRPEAGFVLHTGQPTWHSSIAVGENVCITTSKDILDAIAHNEGVGRYQIALGYASWGKNQLEDEIARGDWLICDADMDLIFNLPYDDRWDAAYKKIGVDRTWLASEIGHA.

This sequence belongs to the UPF0301 (AlgH) family.

In Acinetobacter baumannii (strain SDF), this protein is UPF0301 protein ABSDF3201.